The chain runs to 158 residues: Transcription elongation factor GreA (158 aa).

A coiled-coil region spans residues 3–75; the sequence is TEKTYPMTQE…TQLENMIRNA (73 aa).

Belongs to the GreA/GreB family.

In terms of biological role, necessary for efficient RNA polymerase transcription elongation past template-encoded arresting sites. The arresting sites in DNA have the property of trapping a certain fraction of elongating RNA polymerases that pass through, resulting in locked ternary complexes. Cleavage of the nascent transcript by cleavage factors such as GreA or GreB allows the resumption of elongation from the new 3'terminus. GreA releases sequences of 2 to 3 nucleotides. The chain is Transcription elongation factor GreA from Bacillus cytotoxicus (strain DSM 22905 / CIP 110041 / 391-98 / NVH 391-98).